A 340-amino-acid polypeptide reads, in one-letter code: Photosystem II protein D1 (340 aa).

3 helical membrane-spanning segments follow: residues 25-42 (YIGW…LATV), 114-129 (HFFL…EWEF), and 138-152 (WIFV…AAAA). His114 serves as a coordination point for chlorophyll a. Trp122 provides a ligand contact to pheophytin a. Residues Asp166 and Glu185 each coordinate [CaMn4O5] cluster. A helical transmembrane segment spans residues 193 to 214 (FHILGVAGVFGGSLFSAMHGSL). Chlorophyll a is bound at residue His194. Residues His211 and 260–261 (SF) contribute to the a quinone site. His211 contributes to the Fe cation binding site. His268 is a Fe cation binding site. Residues 270 to 284 (FLAAWPVIGIWITSL) form a helical membrane-spanning segment. [CaMn4O5] cluster is bound by residues His328, Glu329, Asp338, and Ala340.

Belongs to the reaction center PufL/M/PsbA/D family. As to quaternary structure, PSII is composed of 1 copy each of membrane proteins PsbA, PsbB, PsbC, PsbD, PsbE, PsbF, PsbH, PsbI, PsbJ, PsbK, PsbL, PsbM, PsbT, PsbX, PsbY, PsbZ, Psb30/Ycf12, at least 3 peripheral proteins of the oxygen-evolving complex and a large number of cofactors. It forms dimeric complexes. The cofactor is The D1/D2 heterodimer binds P680, chlorophylls that are the primary electron donor of PSII, and subsequent electron acceptors. It shares a non-heme iron and each subunit binds pheophytin, quinone, additional chlorophylls, carotenoids and lipids. D1 provides most of the ligands for the Mn4-Ca-O5 cluster of the oxygen-evolving complex (OEC). There is also a Cl(-1) ion associated with D1 and D2, which is required for oxygen evolution. The PSII complex binds additional chlorophylls, carotenoids and specific lipids.. Post-translationally, tyr-157 forms a radical intermediate that is referred to as redox-active TyrZ, YZ or Y-Z.

The protein localises to the plastid. It is found in the chloroplast thylakoid membrane. It catalyses the reaction 2 a plastoquinone + 4 hnu + 2 H2O = 2 a plastoquinol + O2. Photosystem II (PSII) is a light-driven water:plastoquinone oxidoreductase that uses light energy to abstract electrons from H(2)O, generating O(2) and a proton gradient subsequently used for ATP formation. It consists of a core antenna complex that captures photons, and an electron transfer chain that converts photonic excitation into a charge separation. The D1/D2 (PsbA/PsbD) reaction center heterodimer binds P680, the primary electron donor of PSII as well as several subsequent electron acceptors. The protein is Photosystem II protein D1 of Amphidinium carterae (Dinoflagellate).